A 187-amino-acid chain; its full sequence is Aminodeoxychorismate synthase component 2 (187 aa).

Positions 1-187 (MILLIDNYDS…HQLLANFLHR (187 aa)) constitute a Glutamine amidotransferase type-1 domain. Catalysis depends on residues cysteine 79, histidine 168, and glutamate 170.

In terms of assembly, monomer. Heterodimer consisting of two non-identical subunits: a glutamine amidotransferase subunit (PabA) and a aminodeoxychorismate synthase subunit (PabB).

The catalysed reaction is chorismate + L-glutamine = 4-amino-4-deoxychorismate + L-glutamate. Its pathway is cofactor biosynthesis; tetrahydrofolate biosynthesis; 4-aminobenzoate from chorismate: step 1/2. Inhibited by 6-diazo-5-oxo-L-norleucine (DON). The inhibition is competitive with glutamine, but uncompetitive with chorismate. Functionally, part of a heterodimeric complex that catalyzes the two-step biosynthesis of 4-amino-4-deoxychorismate (ADC), a precursor of p-aminobenzoate (PABA) and tetrahydrofolate. In the first step, a glutamine amidotransferase (PabA) generates ammonia as a substrate that, along with chorismate, is used in the second step, catalyzed by aminodeoxychorismate synthase (PabB) to produce ADC. PabA converts glutamine into glutamate only in the presence of stoichiometric amounts of PabB. This Escherichia coli (strain K12) protein is Aminodeoxychorismate synthase component 2.